Here is a 331-residue protein sequence, read N- to C-terminus: Pyruvate dehydrogenase E1 component subunit beta (331 aa).

Glu-60 contacts thiamine diphosphate. Positions 113, 161, 162, 164, and 166 each coordinate K(+).

Heterodimer of an alpha and a beta chain. Requires thiamine diphosphate as cofactor.

Its subcellular location is the plastid. The protein resides in the chloroplast. The enzyme catalyses N(6)-[(R)-lipoyl]-L-lysyl-[protein] + pyruvate + H(+) = N(6)-[(R)-S(8)-acetyldihydrolipoyl]-L-lysyl-[protein] + CO2. The pyruvate dehydrogenase complex catalyzes the overall conversion of pyruvate to acetyl-CoA and CO(2). It contains multiple copies of three enzymatic components: pyruvate dehydrogenase (E1), dihydrolipoamide acetyltransferase (E2) and lipoamide dehydrogenase (E3). The sequence is that of Pyruvate dehydrogenase E1 component subunit beta (pdhB) from Porphyra purpurea (Red seaweed).